The following is a 330-amino-acid chain: MDRPYDETVDIPDSEDIATPRLQQSLAENLDKLRDSYGDNSKLLTKTNSELANRSIKTASKSVIRMDSSSEKLCDRGSSDDDDDDDNDDDEDEDDDDDDENANIHDATEGVYNPADYEHLTVSSEIKEIFEYIQRYTPQTIELETKLKPFIPDYIPAVGDIDAFLKVPRPDGKPDYLGLLVLDEPCANQSDPTVLDLQLRALSKQTTTKQVTVKSLENAEHQTKAIENWIKSIADLYRTKPPPTVHYTKNMPEISQLMSEWPKSFEESISNMQLSLSQLDCSLKDYVDIICALLDIPVYNNRIHSLHLLFSLYLEFKNSQHFRQNESVIT.

Disordered regions lie at residues 1-21 and 55-112; these read MDRPYDETVDIPDSEDIATPR and SIKT…EGVY. A compositionally biased stretch (acidic residues) spans 7-16; that stretch reads ETVDIPDSED. The segment covering 68 to 79 has biased composition (basic and acidic residues); that stretch reads SSSEKLCDRGSS. Acidic residues predominate over residues 80-101; it reads DDDDDDDNDDDEDEDDDDDDEN.

Belongs to the IFT46 family.

The protein resides in the cytoplasm. Its subcellular location is the cytoskeleton. It localises to the cilium basal body. The protein localises to the cell projection. It is found in the cilium. Functionally, forms part of a complex involved in intraflagellar transport (IFT), the bi-directional movement of particles required for the assembly, maintenance and functioning of primary cilia. The protein is Intraflagellar transport protein 46 homolog of Schistosoma japonicum (Blood fluke).